The primary structure comprises 264 residues: E3 ubiquitin-protein ligase MARCHF8 (264 aa).

The tract at residues 15-47 is disordered; the sequence is LGHSVSRSSNISKAGSPTSVSAPSRFPRTSVTP. Positions 16–47 are enriched in polar residues; the sequence is GHSVSRSSNISKAGSPTSVSAPSRFPRTSVTP. Residues 45–106 form an RING-CH-type zinc finger; that stretch reads VTPSSQDICR…ELCKFEFIME (62 aa). The Zn(2+) site is built by C53, C56, C70, C72, H80, C83, C96, and C99. Helical transmembrane passes span 130-150 and 170-190; these read CSVT…YVLI and FWTK…FMYV.

The protein localises to the cytoplasmic vesicle membrane. It is found in the lysosome membrane. The protein resides in the early endosome membrane. It catalyses the reaction S-ubiquitinyl-[E2 ubiquitin-conjugating enzyme]-L-cysteine + [acceptor protein]-L-lysine = [E2 ubiquitin-conjugating enzyme]-L-cysteine + N(6)-ubiquitinyl-[acceptor protein]-L-lysine.. It functions in the pathway protein modification; protein ubiquitination. E3 ubiquitin-protein ligase that mediates ubiquitination of cd86 and MHC class II proteins, such as hla-dr alpha and beta, and promotes their subsequent endocytosis and sorting to lysosomes via multivesicular bodies. The protein is E3 ubiquitin-protein ligase MARCHF8 (marchf8) of Xenopus laevis (African clawed frog).